Consider the following 648-residue polypeptide: 1-deoxy-D-xylulose-5-phosphate synthase (648 aa).

Thiamine diphosphate is bound by residues His72 and 113–115 (GHA). Asp144 provides a ligand contact to Mg(2+). Residues 145 to 146 (GA), Asn173, and Glu363 each bind thiamine diphosphate. Residue Asn173 participates in Mg(2+) binding.

This sequence belongs to the transketolase family. DXPS subfamily. In terms of assembly, homodimer. It depends on Mg(2+) as a cofactor. Requires thiamine diphosphate as cofactor.

It carries out the reaction D-glyceraldehyde 3-phosphate + pyruvate + H(+) = 1-deoxy-D-xylulose 5-phosphate + CO2. The protein operates within metabolic intermediate biosynthesis; 1-deoxy-D-xylulose 5-phosphate biosynthesis; 1-deoxy-D-xylulose 5-phosphate from D-glyceraldehyde 3-phosphate and pyruvate: step 1/1. Functionally, catalyzes the acyloin condensation reaction between C atoms 2 and 3 of pyruvate and glyceraldehyde 3-phosphate to yield 1-deoxy-D-xylulose-5-phosphate (DXP). This Symbiobacterium thermophilum (strain DSM 24528 / JCM 14929 / IAM 14863 / T) protein is 1-deoxy-D-xylulose-5-phosphate synthase.